Consider the following 507-residue polypeptide: MGTLRADEISNIIRERIEQYNREVKIVNTGTVLQVGDGIARIHGLDEVMAGELIEFEEGTIGIALNLESNNVGVVLMGDGLMIKEGSSVKATGRIAQIPVSEAFLGRVINALAKPIDGRGEISSSESRLIESPAPGIISRRSVYEPLQTGLIAIDSMIPIGRGQRELIIGDRQTGKTAVATDTILNQKGQNVICVYVAIGQKASSVAQVVTTFQEGGAMEYTIVVAETADSPATLQYLAPYTGAALAEYFMYRERHTSIIYDDLSKQAQAYRQMSLLLRRPPGREAYPGDVFYLHSRLLERAAKLSSRLGEGSMTALPIVETQSGDVSAYIPTNVISITDGQIFLSADLFNAGIRPAINVGISVSRVGSAAQIKAMKQVAGKSKLELAQFAELEAFAQFASDLDKATQNQLARGQRLRELLKQSQSDPLAVEDQIATIYTGTNGYLDALEIGQVKKFLVGLRTYLTKKKPKFQEILSSTKIFTEEAETLLREAIQEQIELFLLQEQT.

Residue 170 to 177 coordinates ATP; sequence GDRQTGKT.

Belongs to the ATPase alpha/beta chains family. As to quaternary structure, F-type ATPases have 2 components, CF(1) - the catalytic core - and CF(0) - the membrane proton channel. CF(1) has five subunits: alpha(3), beta(3), gamma(1), delta(1), epsilon(1). CF(0) has four main subunits: a, b, b' and c.

The protein resides in the plastid. Its subcellular location is the chloroplast thylakoid membrane. It carries out the reaction ATP + H2O + 4 H(+)(in) = ADP + phosphate + 5 H(+)(out). In terms of biological role, produces ATP from ADP in the presence of a proton gradient across the membrane. The alpha chain is a regulatory subunit. The protein is ATP synthase subunit alpha, chloroplastic of Phalaenopsis aphrodite subsp. formosana (Moth orchid).